A 718-amino-acid chain; its full sequence is Myeloperoxidase (718 aa).

The first 15 residues, 1 to 15, serve as a signal peptide directing secretion; the sequence is MKLLLALAGLLAPLA. The propeptide occupies 16 to 138; sequence MLQTSNGATP…SSGCAYQDVR (123 aa). Residue N113 is glycosylated (N-linked (GlcNAc...) asparagine). C141 and C154 are joined by a disulfide. D234 is a binding site for heme b. Residue H235 is the Proton acceptor of the active site. D236 lines the Ca(2+) pocket. 2 disulfides stabilise this stretch: C255–C265 and C259–C283. C290 bears the Cysteine sulfenic acid (-SOH) mark. Residue N297 is glycosylated (N-linked (GlcNAc...) asparagine). Positions 308, 310, 312, and 314 each coordinate Ca(2+). 2 N-linked (GlcNAc...) asparagine glycosylation sites follow: N329 and N365. A disulfide bridge connects residues C361 and C372. Heme b contacts are provided by E382 and M383. N457 carries N-linked (GlcNAc...) asparagine glycosylation. H476 is a heme b binding site. 2 disulfide bridges follow: C580/C637 and C678/C704. N711 carries N-linked (GlcNAc...) asparagine glycosylation.

It belongs to the peroxidase family. XPO subfamily. Homodimer; disulfide-linked. Each monomer consists of a light and a heavy chain. Found in a complex with CP and LTF; interacts directly with CP, which protects CP antioxidant properties by MPO. Ca(2+) is required as a cofactor. Heme b serves as cofactor.

The protein resides in the lysosome. It catalyses the reaction chloride + H2O2 + H(+) = hypochlorous acid + H2O. Part of the host defense system of polymorphonuclear leukocytes. It is responsible for microbicidal activity against a wide range of organisms. In the stimulated PMN, MPO catalyzes the production of hypohalous acids, primarily hypochlorous acid in physiologic situations, and other toxic intermediates that greatly enhance PMN microbicidal activity. Mediates the proteolytic cleavage of alpha-1-microglobulin to form t-alpha-1-microglobulin, which potently inhibits oxidation of low density lipoprotein particles and limits vascular damage. The protein is Myeloperoxidase (Mpo) of Mus musculus (Mouse).